The primary structure comprises 638 residues: MKGGCVSQWKAAAGFLFCVMVFASAERPVFTNHFLVELHKGGEDKARQVAAEHGFGVRKLPFAEGLYHFYHNGLAKAKRRRSLHHKQQLERDPRVKMALQQEGFDRKKRGYRDINEIDINMNDPLFTKQWYLINTGQADGTPGLDLNVAEAWELGYTGKGVTIGIMDDGIDYLHPDLASNYNAEASYDFSSNDPYPYPRYTDDWFNSHGTRCAGEVSAAANNNICGVGVAYNSKVAGIRMLDQPFMTDIIEASSISHMPQLIDIYSASWGPTDNGKTVDGPRELTLQAMADGVNKGRGGKGSIYVWASGDGGSYDDCNCDGYASSMWTISINSAINDGRTALYDESCSSTLASTFSNGRKRNPEAGVATTDLYGNCTLRHSGTSAAAPEAAGVFALALEANLGLTWRDMQHLTVLTSKRNQLHDEVHQWRRNGVGLEFNHLFGYGVLDAGAMVKMAKDWKTVPERFHCVGGSVQDPEKIPSTGKLVLTLTTDACEGKENFVRYLEHVQAVITVNATRRGDLNINMTSPMGTKSILLSRRPRDDDSKVGFDKWPFMTTHTWGEDARGTWTLELGFVGSAPQKGVLKEWTLMLHGTQSAPYIDQVVRDYQSKLAMSKKEELEEELDEAVERSLKSILNKN.

Residues 1–25 (MKGGCVSQWKAAAGFLFCVMVFASA) form the signal peptide. Residues 26 to 109 (ERPVFTNHFL…QQEGFDRKKR (84 aa)) constitute a propeptide that is removed on maturation. The region spanning 129–453 (QWYLINTGQA…YGVLDAGAMV (325 aa)) is the Peptidase S8 domain. Residues D167 and H208 each act as charge relay system in the active site. Disulfide bonds link C225–C376 and C317–C347. A glycan (N-linked (GlcNAc...) asparagine) is linked at N375. The active-site Charge relay system is the S384. Positions 461-597 (TVPERFHCVG…TLMLHGTQSA (137 aa)) constitute a P/Homo B domain. A disulfide bridge links C468 with C494. 2 N-linked (GlcNAc...) asparagine glycosylation sites follow: N514 and N524.

Belongs to the peptidase S8 family. Furin subfamily.

Its subcellular location is the cytoplasmic vesicle. It localises to the secretory vesicle. The protein localises to the secreted. The enzyme catalyses Release of protein hormones and neuropeptides from their precursors, generally by hydrolysis of -Lys-Arg-|- bonds.. Functionally, serine endopeptidase which is involved in the processing of hormone and other protein precursors at sites comprised of pairs of basic amino acid residues. Responsible for the release of glucagon from proglucagon in pancreatic A cells. The polypeptide is Neuroendocrine convertase 2 (PCSK2) (Homo sapiens (Human)).